We begin with the raw amino-acid sequence, 389 residues long: Lipid-A-disaccharide synthase (389 aa).

Belongs to the LpxB family.

It catalyses the reaction a lipid X + a UDP-2-N,3-O-bis[(3R)-3-hydroxyacyl]-alpha-D-glucosamine = a lipid A disaccharide + UDP + H(+). It functions in the pathway bacterial outer membrane biogenesis; LPS lipid A biosynthesis. Condensation of UDP-2,3-diacylglucosamine and 2,3-diacylglucosamine-1-phosphate to form lipid A disaccharide, a precursor of lipid A, a phosphorylated glycolipid that anchors the lipopolysaccharide to the outer membrane of the cell. This Albidiferax ferrireducens (strain ATCC BAA-621 / DSM 15236 / T118) (Rhodoferax ferrireducens) protein is Lipid-A-disaccharide synthase.